The chain runs to 271 residues: Thiazole synthase (271 aa).

The active-site Schiff-base intermediate with DXP is Lys104. 1-deoxy-D-xylulose 5-phosphate-binding positions include Gly165, Ala192–Gly193, and Asn214–Thr215.

Belongs to the ThiG family. In terms of assembly, homotetramer. Forms heterodimers with either ThiH or ThiS.

The protein localises to the cytoplasm. The catalysed reaction is [ThiS sulfur-carrier protein]-C-terminal-Gly-aminoethanethioate + 2-iminoacetate + 1-deoxy-D-xylulose 5-phosphate = [ThiS sulfur-carrier protein]-C-terminal Gly-Gly + 2-[(2R,5Z)-2-carboxy-4-methylthiazol-5(2H)-ylidene]ethyl phosphate + 2 H2O + H(+). It functions in the pathway cofactor biosynthesis; thiamine diphosphate biosynthesis. In terms of biological role, catalyzes the rearrangement of 1-deoxy-D-xylulose 5-phosphate (DXP) to produce the thiazole phosphate moiety of thiamine. Sulfur is provided by the thiocarboxylate moiety of the carrier protein ThiS. In vitro, sulfur can be provided by H(2)S. In Burkholderia mallei (strain ATCC 23344), this protein is Thiazole synthase.